An 862-amino-acid polypeptide reads, in one-letter code: Protein translocase subunit SecA (862 aa).

ATP is bound by residues Gln88, 106–110 (GEGKT), and Asp506. The Zn(2+) site is built by Cys839, Cys841, Cys850, and His851.

Belongs to the SecA family. Monomer and homodimer. Part of the essential Sec protein translocation apparatus which comprises SecA, SecYEG and auxiliary proteins SecDF-YajC and YidC. Requires Zn(2+) as cofactor.

It is found in the cell inner membrane. Its subcellular location is the cytoplasm. It carries out the reaction ATP + H2O + cellular proteinSide 1 = ADP + phosphate + cellular proteinSide 2.. In terms of biological role, part of the Sec protein translocase complex. Interacts with the SecYEG preprotein conducting channel. Has a central role in coupling the hydrolysis of ATP to the transfer of proteins into and across the cell membrane, serving as an ATP-driven molecular motor driving the stepwise translocation of polypeptide chains across the membrane. This Campylobacter jejuni subsp. jejuni serotype O:2 (strain ATCC 700819 / NCTC 11168) protein is Protein translocase subunit SecA.